Consider the following 269-residue polypeptide: Undecaprenyl-diphosphatase (269 aa).

8 consecutive transmembrane segments (helical) span residues 3–23 (LLIK…LPIS), 41–61 (FATM…VFYY), 78–98 (GFNL…IGLL), 107–127 (LFSP…MIVI), 148–167 (SLLI…SRSA), 184–204 (AEFS…LSLL), 213–233 (LEWQ…LFVV), and 248–268 (FAYY…EKIV).

This sequence belongs to the UppP family.

The protein localises to the cell membrane. It catalyses the reaction di-trans,octa-cis-undecaprenyl diphosphate + H2O = di-trans,octa-cis-undecaprenyl phosphate + phosphate + H(+). Functionally, catalyzes the dephosphorylation of undecaprenyl diphosphate (UPP). Confers resistance to bacitracin. The sequence is that of Undecaprenyl-diphosphatase from Thermoanaerobacter sp. (strain X514).